The primary structure comprises 1078 residues: Cell wall acid trehalase ATC1 (1078 aa).

The N-terminal stretch at 1 to 54 is a signal peptide; it reads MAANSSFFLADNCAPHNQSFIQFCIHAASKKKGRIALMCLANLFLLFSFHLLYA. N4, N17, N150, N184, N242, N287, N301, and N350 each carry an N-linked (GlcNAc...) asparagine glycan. 478 to 479 contacts substrate; that stretch reads WD. N-linked (GlcNAc...) asparagine glycans are attached at residues N532, N591, and N601. E607 acts as the Proton donor in catalysis. Residues N661 and N670 are each glycosylated (N-linked (GlcNAc...) asparagine). 676–677 contributes to the substrate binding site; it reads KQ. 8 N-linked (GlcNAc...) asparagine glycosylation sites follow: N829, N837, N904, N922, N931, N946, N1003, and N1037.

The protein belongs to the glycosyl hydrolase 65 family.

The protein resides in the secreted. It is found in the cell wall. It carries out the reaction alpha,alpha-trehalose + H2O = alpha-D-glucose + beta-D-glucose. Cell wall acid trehalase that catalyzes hydrolysis of the disaccharide trehalose and required for growth on trehalose as carbon source. Plays a role in dimorphic conversion and virulence. The protein is Cell wall acid trehalase ATC1 (ATC1) of Candida albicans (strain SC5314 / ATCC MYA-2876) (Yeast).